A 1611-amino-acid chain; its full sequence is Pentafunctional AROM polypeptide (1611 aa).

The 3-dehydroquinate synthase stretch occupies residues Met1–Asp406. NAD(+)-binding positions include Asp64–Asn66, Glu97–Lys100, Gly128–Val130, and Asp133. Position 144 (Arg144) interacts with 7-phospho-2-dehydro-3-deoxy-D-arabino-heptonate. Thr153–Thr154 contributes to the NAD(+) binding site. Residues Asp160 and Lys166 each contribute to the 7-phospho-2-dehydro-3-deoxy-D-arabino-heptonate site. Lys175 contributes to the NAD(+) binding site. Asn176 contacts 7-phospho-2-dehydro-3-deoxy-D-arabino-heptonate. NAD(+) contacts are provided by residues Trp193–Thr196 and Asn204. Glu208 contributes to the Zn(2+) binding site. Residues Glu208–Lys211 and Lys272 each bind 7-phospho-2-dehydro-3-deoxy-D-arabino-heptonate. Glu282 functions as the Proton acceptor; for 3-dehydroquinate synthase activity in the catalytic mechanism. Residues Arg286 to Asn290 and His293 each bind 7-phospho-2-dehydro-3-deoxy-D-arabino-heptonate. Position 293 (His293) interacts with Zn(2+). His297 acts as the Proton acceptor; for 3-dehydroquinate synthase activity in catalysis. His309 and Lys378 together coordinate 7-phospho-2-dehydro-3-deoxy-D-arabino-heptonate. His309 lines the Zn(2+) pocket. An EPSP synthase region spans residues Val419–Val882. Residue Cys864 is the For EPSP synthase activity of the active site. A shikimate kinase region spans residues Asp915–Ser1092. Residue Gly922–Ser929 participates in ATP binding. The segment at Leu1093 to Asp1309 is 3-dehydroquinase. The active-site Proton acceptor; for 3-dehydroquinate dehydratase activity is His1212. Lys1240 (schiff-base intermediate with substrate; for 3-dehydroquinate dehydratase activity) is an active-site residue. Residues Lys1322–Met1611 form a shikimate dehydrogenase region.

In the N-terminal section; belongs to the sugar phosphate cyclases superfamily. Dehydroquinate synthase family. This sequence in the 2nd section; belongs to the EPSP synthase family. The protein in the 3rd section; belongs to the shikimate kinase family. It in the 4th section; belongs to the type-I 3-dehydroquinase family. In the C-terminal section; belongs to the shikimate dehydrogenase family. In terms of assembly, homodimer. It depends on Zn(2+) as a cofactor.

The protein resides in the cytoplasm. The enzyme catalyses 7-phospho-2-dehydro-3-deoxy-D-arabino-heptonate = 3-dehydroquinate + phosphate. The catalysed reaction is 3-dehydroquinate = 3-dehydroshikimate + H2O. It carries out the reaction shikimate + NADP(+) = 3-dehydroshikimate + NADPH + H(+). It catalyses the reaction shikimate + ATP = 3-phosphoshikimate + ADP + H(+). The enzyme catalyses 3-phosphoshikimate + phosphoenolpyruvate = 5-O-(1-carboxyvinyl)-3-phosphoshikimate + phosphate. Its pathway is metabolic intermediate biosynthesis; chorismate biosynthesis; chorismate from D-erythrose 4-phosphate and phosphoenolpyruvate: step 2/7. The protein operates within metabolic intermediate biosynthesis; chorismate biosynthesis; chorismate from D-erythrose 4-phosphate and phosphoenolpyruvate: step 3/7. It participates in metabolic intermediate biosynthesis; chorismate biosynthesis; chorismate from D-erythrose 4-phosphate and phosphoenolpyruvate: step 4/7. It functions in the pathway metabolic intermediate biosynthesis; chorismate biosynthesis; chorismate from D-erythrose 4-phosphate and phosphoenolpyruvate: step 5/7. Its pathway is metabolic intermediate biosynthesis; chorismate biosynthesis; chorismate from D-erythrose 4-phosphate and phosphoenolpyruvate: step 6/7. Functionally, the AROM polypeptide catalyzes 5 consecutive enzymatic reactions in prechorismate polyaromatic amino acid biosynthesis. This chain is Pentafunctional AROM polypeptide, found in Malassezia globosa (strain ATCC MYA-4612 / CBS 7966) (Dandruff-associated fungus).